A 396-amino-acid chain; its full sequence is 1-deoxy-D-xylulose 5-phosphate reductoisomerase (396 aa).

The NADPH site is built by T10, G11, S12, I13, and N123. K124 provides a ligand contact to 1-deoxy-D-xylulose 5-phosphate. E125 lines the NADPH pocket. D149 contributes to the Mn(2+) binding site. 1-deoxy-D-xylulose 5-phosphate is bound by residues S150, E151, S185, and H208. E151 is a Mn(2+) binding site. G214 is a binding site for NADPH. 1-deoxy-D-xylulose 5-phosphate contacts are provided by S221, N226, K227, and E230. E230 serves as a coordination point for Mn(2+).

It belongs to the DXR family. Mg(2+) serves as cofactor. The cofactor is Mn(2+).

The catalysed reaction is 2-C-methyl-D-erythritol 4-phosphate + NADP(+) = 1-deoxy-D-xylulose 5-phosphate + NADPH + H(+). It functions in the pathway isoprenoid biosynthesis; isopentenyl diphosphate biosynthesis via DXP pathway; isopentenyl diphosphate from 1-deoxy-D-xylulose 5-phosphate: step 1/6. Its function is as follows. Catalyzes the NADPH-dependent rearrangement and reduction of 1-deoxy-D-xylulose-5-phosphate (DXP) to 2-C-methyl-D-erythritol 4-phosphate (MEP). In Shewanella baltica (strain OS223), this protein is 1-deoxy-D-xylulose 5-phosphate reductoisomerase.